We begin with the raw amino-acid sequence, 195 residues long: Meiotically up-regulated gene 84 protein (195 aa).

Residues 1 to 84 (MTLTHHSTFI…IMVKVPTYEY (84 aa)) lie on the Cytoplasmic side of the membrane. A helical membrane pass occupies residues 85-105 (YGFVMYLVSMLGFGVYIVWAL). Residues 106-122 (TPAPVLKFFEIHYYLSR) are Lumenal-facing. A helical membrane pass occupies residues 123–143 (WWALAIPTWLFVLVIYIHVVL). Over 144–195 (NAYNTEVLTKPFSSLECIVDQYALVGEEDGAAHGRVVDLRLCDVNKQQLEET) the chain is Cytoplasmic.

Its subcellular location is the endoplasmic reticulum membrane. Functionally, has a role in meiosis. The sequence is that of Meiotically up-regulated gene 84 protein (mug84) from Schizosaccharomyces pombe (strain 972 / ATCC 24843) (Fission yeast).